Consider the following 936-residue polypeptide: Lipoxygenase 2.1, chloroplastic (936 aa).

The interval 1 to 69 (MLTATKPLVG…LSADSNGAAV (69 aa)) is disordered. Residues 47–59 (STSTSTTTTTTTT) show a composition bias toward low complexity. The PLAT domain maps to 88 to 217 (MKATVTVHMS…CTPDKRVFFP (130 aa)). The 717-residue stretch at 220–936 (SYLPSQTPKG…EMGIPNSISI (717 aa)) folds into the Lipoxygenase domain. The interval 264 to 308 (LGNPDDDNNPTTRPVLGGKEHPYPRRCRTGRPRSKKDPFSEERSH) is disordered. The span at 287–297 (PRRCRTGRPRS) shows a compositional bias: basic residues. A compositionally biased stretch (basic and acidic residues) spans 298-308 (KKDPFSEERSH). Fe cation contacts are provided by histidine 587, histidine 592, histidine 777, asparagine 781, and isoleucine 936.

Belongs to the lipoxygenase family. Fe cation serves as cofactor. The N-terminus is blocked.

It localises to the plastid. Its subcellular location is the chloroplast. It carries out the reaction (9Z,12Z)-octadecadienoate + O2 = (13S)-hydroperoxy-(9Z,11E)-octadecadienoate. It catalyses the reaction (9Z,12Z,15Z)-octadecatrienoate + O2 = (13S)-hydroperoxy-(9Z,11E,15Z)-octadecatrienoate. It participates in lipid metabolism; oxylipin biosynthesis. Plant lipoxygenase may be involved in a number of diverse aspects of plant physiology including growth and development, pest resistance, and senescence or responses to wounding. This enzyme is possibly involved in jasmonic acid synthesis. It exhibits linoleate 13-lipoxygenase and arachidonate 15-lipoxygenase activity. This is Lipoxygenase 2.1, chloroplastic (LOX2.1) from Hordeum vulgare (Barley).